The sequence spans 189 residues: Potassium-transporting ATPase KdpC subunit (189 aa).

Residues 8 to 28 traverse the membrane as a helical segment; the sequence is LVMLILLTLITGIAYPLLTTG.

Belongs to the KdpC family. In terms of assembly, the system is composed of three essential subunits: KdpA, KdpB and KdpC.

The protein localises to the cell inner membrane. Its function is as follows. Part of the high-affinity ATP-driven potassium transport (or Kdp) system, which catalyzes the hydrolysis of ATP coupled with the electrogenic transport of potassium into the cytoplasm. This subunit acts as a catalytic chaperone that increases the ATP-binding affinity of the ATP-hydrolyzing subunit KdpB by the formation of a transient KdpB/KdpC/ATP ternary complex. This chain is Potassium-transporting ATPase KdpC subunit, found in Serratia proteamaculans (strain 568).